The primary structure comprises 723 residues: Protein Aster-A (723 aa).

Residues 1 to 18 (MFDTTPHSGRSSPSSSPS) are compositionally biased toward low complexity. The interval 1-63 (MFDTTPHSGR…SGVSGTLSTQ (63 aa)) is disordered. Positions 28–38 (PSRPPSAPEPE) are enriched in pro residues. The GRAM domain occupies 93–160 (EDFRKLFSKL…KEVTCLKKEK (68 aa)). Residues 257 to 337 (SPSGAADRSQ…DGPTSNLGPL (81 aa)) are disordered. Residues Ser-265, Ser-269, and Ser-273 each carry the phosphoserine modification. Positions 302–314 (DSQLDASSSQTVT) are enriched in polar residues. In terms of domain architecture, VASt spans 370 to 541 (SGRLLINSVF…ELAKAEKVSL (172 aa)). Residue Ser-418 is modified to Phosphoserine. The interval 562–601 (LSWRGHRDGPQHPDPDPCTQTSMHTSGSLSSRFSEPSVDQ) is disordered. The segment covering 566-576 (GHRDGPQHPDP) has biased composition (basic and acidic residues). Over residues 579–595 (CTQTSMHTSGSLSSRFS) the composition is skewed to polar residues. The helical transmembrane segment at 610-630 (ALVLISIVLIVLIALNALLFY) threads the bilayer.

It localises to the endoplasmic reticulum membrane. It is found in the cell membrane. The protein resides in the cytoplasmic vesicle. Its subcellular location is the autophagosome. In terms of biological role, cholesterol transporter that mediates non-vesicular transport of cholesterol from the plasma membrane (PM) to the endoplasmic reticulum (ER). Contains unique domains for binding cholesterol and the PM, thereby serving as a molecular bridge for the transfer of cholesterol from the PM to the ER. Plays a crucial role in cholesterol homeostasis and has the unique ability to localize to the PM based on the level of membrane cholesterol. In lipid-poor conditions localizes to the ER membrane and in response to excess cholesterol in the PM is recruited to the endoplasmic reticulum-plasma membrane contact sites (EPCS) which is mediated by the GRAM domain. At the EPCS, the sterol-binding VASt/ASTER domain binds to the cholesterol in the PM and facilitates its transfer from the PM to ER. May play a role in tumor progression. Plays a role in autophagy regulation and is required for biogenesis of the autophagosome. This function in autophagy requires its cholesterol-transfer activity. This Rattus norvegicus (Rat) protein is Protein Aster-A.